A 226-amino-acid polypeptide reads, in one-letter code: ATP synthase F(0) complex subunit a (226 aa).

6 helical membrane passes run 9-29 (FITP…FPAM), 68-88 (WALM…LGLV), 97-117 (QLSM…ITGF), 138-158 (IPML…ALAI), 164-184 (ITAG…LTSI), and 201-223 (ILEF…LYLH).

This sequence belongs to the ATPase A chain family. As to quaternary structure, component of the ATP synthase complex composed at least of ATP5F1A/subunit alpha, ATP5F1B/subunit beta, ATP5MC1/subunit c (homooctomer), MT-ATP6/subunit a, MT-ATP8/subunit 8, ATP5ME/subunit e, ATP5MF/subunit f, ATP5MG/subunit g, ATP5MK/subunit k, ATP5MJ/subunit j, ATP5F1C/subunit gamma, ATP5F1D/subunit delta, ATP5F1E/subunit epsilon, ATP5PF/subunit F6, ATP5PB/subunit b, ATP5PD/subunit d, ATP5PO/subunit OSCP. ATP synthase complex consists of a soluble F(1) head domain (subunits alpha(3) and beta(3)) - the catalytic core - and a membrane F(0) domain - the membrane proton channel (subunits c, a, 8, e, f, g, k and j). These two domains are linked by a central stalk (subunits gamma, delta, and epsilon) rotating inside the F1 region and a stationary peripheral stalk (subunits F6, b, d, and OSCP). Interacts with DNAJC30; interaction is direct.

It is found in the mitochondrion inner membrane. The catalysed reaction is H(+)(in) = H(+)(out). Functionally, subunit a, of the mitochondrial membrane ATP synthase complex (F(1)F(0) ATP synthase or Complex V) that produces ATP from ADP in the presence of a proton gradient across the membrane which is generated by electron transport complexes of the respiratory chain. ATP synthase complex consist of a soluble F(1) head domain - the catalytic core - and a membrane F(1) domain - the membrane proton channel. These two domains are linked by a central stalk rotating inside the F(1) region and a stationary peripheral stalk. During catalysis, ATP synthesis in the catalytic domain of F(1) is coupled via a rotary mechanism of the central stalk subunits to proton translocation. With the subunit c (ATP5MC1), forms the proton-conducting channel in the F(0) domain, that contains two crucial half-channels (inlet and outlet) that facilitate proton movement from the mitochondrial intermembrane space (IMS) into the matrix. Protons are taken up via the inlet half-channel and released through the outlet half-channel, following a Grotthuss mechanism. This is ATP synthase F(0) complex subunit a from Dugong dugon (Dugong).